A 390-amino-acid polypeptide reads, in one-letter code: Chorismate synthase (390 aa).

Residues R39 and R45 each contribute to the NADP(+) site. Residues 132–134, 253–254, G298, 313–317, and R339 contribute to the FMN site; these read RSS, NA, and KPIPT.

It belongs to the chorismate synthase family. As to quaternary structure, homotetramer. The cofactor is FMNH2.

The enzyme catalyses 5-O-(1-carboxyvinyl)-3-phosphoshikimate = chorismate + phosphate. It functions in the pathway metabolic intermediate biosynthesis; chorismate biosynthesis; chorismate from D-erythrose 4-phosphate and phosphoenolpyruvate: step 7/7. In terms of biological role, catalyzes the anti-1,4-elimination of the C-3 phosphate and the C-6 proR hydrogen from 5-enolpyruvylshikimate-3-phosphate (EPSP) to yield chorismate, which is the branch point compound that serves as the starting substrate for the three terminal pathways of aromatic amino acid biosynthesis. This reaction introduces a second double bond into the aromatic ring system. The protein is Chorismate synthase of Bacillus subtilis (strain 168).